A 776-amino-acid polypeptide reads, in one-letter code: Probable inorganic carbon transporter subunit DabA (776 aa).

4 residues coordinate Zn(2+): Cys-313, Asp-315, His-473, and Cys-488.

Belongs to the inorganic carbon transporter (TC 9.A.2) DabA family. As to quaternary structure, forms a complex with DabB. The cofactor is Zn(2+).

The protein localises to the cell inner membrane. Functionally, part of an energy-coupled inorganic carbon pump. This Chromobacterium violaceum (strain ATCC 12472 / DSM 30191 / JCM 1249 / CCUG 213 / NBRC 12614 / NCIMB 9131 / NCTC 9757 / MK) protein is Probable inorganic carbon transporter subunit DabA.